The primary structure comprises 655 residues: Acetyl-coenzyme A synthetase (655 aa).

CoA contacts are provided by residues 193–196 and threonine 313; that span reads RGNK. Residues 389-391, 413-418, aspartate 502, and arginine 517 each bind ATP; these read GEP and DTWWQT. Residue serine 525 participates in CoA binding. Arginine 528 contacts ATP. Valine 539 and histidine 541 together coordinate Mg(2+). Position 586 (arginine 586) interacts with CoA. Lysine 611 carries the post-translational modification N6-acetyllysine.

This sequence belongs to the ATP-dependent AMP-binding enzyme family. Mg(2+) is required as a cofactor. Acetylated. Deacetylation by the SIR2-homolog deacetylase activates the enzyme.

It catalyses the reaction acetate + ATP + CoA = acetyl-CoA + AMP + diphosphate. Its function is as follows. Catalyzes the conversion of acetate into acetyl-CoA (AcCoA), an essential intermediate at the junction of anabolic and catabolic pathways. AcsA undergoes a two-step reaction. In the first half reaction, AcsA combines acetate with ATP to form acetyl-adenylate (AcAMP) intermediate. In the second half reaction, it can then transfer the acetyl group from AcAMP to the sulfhydryl group of CoA, forming the product AcCoA. The chain is Acetyl-coenzyme A synthetase from Psychrobacter cryohalolentis (strain ATCC BAA-1226 / DSM 17306 / VKM B-2378 / K5).